Consider the following 114-residue polypeptide: Large ribosomal subunit protein uL22 (114 aa).

Belongs to the universal ribosomal protein uL22 family. Part of the 50S ribosomal subunit.

Its function is as follows. This protein binds specifically to 23S rRNA; its binding is stimulated by other ribosomal proteins, e.g. L4, L17, and L20. It is important during the early stages of 50S assembly. It makes multiple contacts with different domains of the 23S rRNA in the assembled 50S subunit and ribosome. In terms of biological role, the globular domain of the protein is located near the polypeptide exit tunnel on the outside of the subunit, while an extended beta-hairpin is found that lines the wall of the exit tunnel in the center of the 70S ribosome. This Streptococcus thermophilus (strain CNRZ 1066) protein is Large ribosomal subunit protein uL22.